The primary structure comprises 116 residues: Large ribosomal subunit protein uL22c (116 aa).

Belongs to the universal ribosomal protein uL22 family. As to quaternary structure, part of the 50S ribosomal subunit.

It localises to the plastid. The protein resides in the chloroplast. Its function is as follows. This protein binds specifically to 23S rRNA. The globular domain of the protein is located near the polypeptide exit tunnel on the outside of the subunit, while an extended beta-hairpin is found that lines the wall of the exit tunnel in the center of the 70S ribosome. In Psilotum nudum (Whisk fern), this protein is Large ribosomal subunit protein uL22c (rpl22).